Here is a 295-residue protein sequence, read N- to C-terminus: Ankyrin repeat and SOCS box protein 17 (295 aa).

The stretch at 146 to 176 (SGITPLFYVAQTRQSNIFKILLQYGILEREK) is one ANK repeat. The SOCS box domain maps to 232-295 (LGRRPIISNW…RLQNYLNLEI (64 aa)).

This sequence belongs to the ankyrin SOCS box (ASB) family.

The protein operates within protein modification; protein ubiquitination. Functionally, may be a substrate-recognition component of a SCF-like ECS (Elongin-Cullin-SOCS-box protein) E3 ubiquitin-protein ligase complex which mediates the ubiquitination and subsequent proteasomal degradation of target proteins. This Macaca fascicularis (Crab-eating macaque) protein is Ankyrin repeat and SOCS box protein 17 (ASB17).